A 301-amino-acid chain; its full sequence is F-actin-capping protein subunit beta (301 aa).

Ser31 carries the phosphoserine modification. Residue Lys264 is modified to N6-acetyllysine.

Belongs to the F-actin-capping protein beta subunit family. As to quaternary structure, component of the F-actin capping complex, composed of a heterodimer of an alpha and a beta subunit. Subunit of dynactin, a multiprotein complex part of a tripartite complex with dynein and a adapter, such as BICDL1, BICD2 or HOOK3. The dynactin complex is built around ACTR1A/ACTB filament and consists of an actin-related filament composed of a shoulder domain, a pointed end and a barbed end. Its length is defined by its flexible shoulder domain. The soulder is composed of 2 DCTN1 subunits, 4 DCTN2 and 2 DCTN3. The 4 DCNT2 (via N-terminus) bind the ACTR1A filament and act as molecular rulers to determine the length. The pointed end is important for binding dynein-dynactin cargo adapters. Consists of 4 subunits: ACTR10, DCNT4, DCTN5 and DCTN6. The barbed end is composed of a CAPZA1:CAPZB heterodimers, which binds ACTR1A/ACTB filament and dynactin and stabilizes dynactin. Interacts with ARHGAP17. Interaction with RCSD1/CAPZIP. Component of the WASH complex, composed of F-actin-capping protein subunit alpha (CAPZA1, CAPZA2 or CAPZA3), F-actin-capping protein subunit beta (CAPZB), WASH (WASHC1, WASH2P, WASH3P, WASH4P, WASH5P or WASH6P), WASHC2 (WASHC2A or WASHC2C), WASHC3, WASHC4 and WASHC5. Interacts with ACTG1. Directly interacts with CRACD; this interaction decreases binding to actin. In terms of tissue distribution, the isoform beta-3 is predominantly expressed in the testis. It is only detected in total sperm, sperm heads and the calyx fraction, but not in sperm tails or any supernatant fraction. Weaker expression also found in brain.

Its subcellular location is the cytoplasm. It is found in the cytoskeleton. It localises to the perinuclear theca. The protein localises to the calyx. Its function is as follows. F-actin-capping proteins bind in a Ca(2+)-independent manner to the fast growing ends of actin filaments (barbed end) thereby blocking the exchange of subunits at these ends. Unlike other capping proteins (such as gelsolin and severin), these proteins do not sever actin filaments. Plays a role in the regulation of cell morphology and cytoskeletal organization. Forms, with CAPZB, the barbed end of the fast growing ends of actin filaments in the dynactin complex and stabilizes dynactin structure. The dynactin multiprotein complex activates the molecular motor dynein for ultra-processive transport along microtubules. In Bos taurus (Bovine), this protein is F-actin-capping protein subunit beta (CAPZB).